The chain runs to 292 residues: Small ribosomal subunit protein uS3 (292 aa).

Residues 39–110 enclose the KH type-2 domain; that stretch reads IRLEIMKFLK…KISIKIKEVK (72 aa). Residues 247–268 form a disordered region; that stretch reads KANERQSRAALNKKDGLSKDET.

Belongs to the universal ribosomal protein uS3 family. Part of the 30S ribosomal subunit. Forms a tight complex with proteins S10 and S14.

Its function is as follows. Binds the lower part of the 30S subunit head. Binds mRNA in the 70S ribosome, positioning it for translation. In Borrelia garinii subsp. bavariensis (strain ATCC BAA-2496 / DSM 23469 / PBi) (Borreliella bavariensis), this protein is Small ribosomal subunit protein uS3.